We begin with the raw amino-acid sequence, 185 residues long: Large ribosomal subunit protein bL17 (185 aa).

This sequence belongs to the bacterial ribosomal protein bL17 family. In terms of assembly, part of the 50S ribosomal subunit. Contacts protein L32.

This Rhodococcus erythropolis (strain PR4 / NBRC 100887) protein is Large ribosomal subunit protein bL17.